Reading from the N-terminus, the 239-residue chain is Glandular kallikrein, prostatic (239 aa).

A Peptidase S1 domain is found at 1–236 (VIGGQECARD…YREWIERTMA (236 aa)). Cystine bridges form between Cys-7–Cys-151, Cys-26–Cys-42, Cys-128–Cys-197, Cys-162–Cys-176, and Cys-187–Cys-212. The active-site Charge relay system is His-41. Asn-78 is a glycosylation site (N-linked (GlcNAc...) asparagine). The active-site Charge relay system is the Asp-96. N-linked (GlcNAc...) asparagine glycosylation is present at Asn-169. Ser-191 serves as the catalytic Charge relay system.

This sequence belongs to the peptidase S1 family. Kallikrein subfamily.

It carries out the reaction Preferential cleavage of Arg-|-Xaa bonds in small molecule substrates. Highly selective action to release kallidin (lysyl-bradykinin) from kininogen involves hydrolysis of Met-|-Xaa or Leu-|-Xaa.. Glandular kallikreins cleave Met-Lys and Arg-Ser bonds in kininogen to release Lys-bradykinin. The chain is Glandular kallikrein, prostatic from Cavia porcellus (Guinea pig).